The chain runs to 1071 residues: Ubiquitin carboxyl-terminal hydrolase 7 (1071 aa).

The interval K467–P532 is disordered. Low complexity predominate over residues Q471 to Q480. Over residues P481 to K495 the composition is skewed to polar residues. Composition is skewed to pro residues over residues P497 to L507 and P516 to P532. In terms of domain architecture, USP spans T609–V1069. C618 (nucleophile) is an active-site residue. The segment at R913–K942 is disordered. Polar residues predominate over residues K920–G932. H1014 (proton acceptor) is an active-site residue.

Belongs to the peptidase C19 family.

It localises to the cytoplasm. It carries out the reaction Thiol-dependent hydrolysis of ester, thioester, amide, peptide and isopeptide bonds formed by the C-terminal Gly of ubiquitin (a 76-residue protein attached to proteins as an intracellular targeting signal).. Functionally, involved in the sorting of ubiquitinated cargo proteins at the multivesicular body (MVB). This Saccharomyces cerevisiae (strain ATCC 204508 / S288c) (Baker's yeast) protein is Ubiquitin carboxyl-terminal hydrolase 7 (UBP7).